Here is a 190-residue protein sequence, read N- to C-terminus: UPF0398 protein LAR_0869 (190 aa).

Belongs to the UPF0398 family.

This chain is UPF0398 protein LAR_0869, found in Limosilactobacillus reuteri subsp. reuteri (strain JCM 1112) (Lactobacillus reuteri).